Here is a 167-residue protein sequence, read N- to C-terminus: Peptide deformylase (167 aa).

Fe cation is bound by residues C91 and H133. The active site involves E134. H137 provides a ligand contact to Fe cation.

Belongs to the polypeptide deformylase family. The cofactor is Fe(2+).

The enzyme catalyses N-terminal N-formyl-L-methionyl-[peptide] + H2O = N-terminal L-methionyl-[peptide] + formate. In terms of biological role, removes the formyl group from the N-terminal Met of newly synthesized proteins. Requires at least a dipeptide for an efficient rate of reaction. N-terminal L-methionine is a prerequisite for activity but the enzyme has broad specificity at other positions. The sequence is that of Peptide deformylase from Nitrosococcus oceani (strain ATCC 19707 / BCRC 17464 / JCM 30415 / NCIMB 11848 / C-107).